We begin with the raw amino-acid sequence, 232 residues long: Somatolactin (232 aa).

An N-terminal signal peptide occupies residues 1–16 (MHNWKGVWLCSLFLTF). Cystine bridges form between Cys31-Cys41, Cys91-Cys206, and Cys223-Cys231. Residue Asn147 is glycosylated (N-linked (GlcNAc...) asparagine).

Belongs to the somatotropin/prolactin family. In terms of tissue distribution, pituitary gland.

Its subcellular location is the secreted. In Protopterus annectens (African lungfish), this protein is Somatolactin.